The primary structure comprises 73 residues: Large ribosomal subunit protein bL31 (73 aa).

Belongs to the bacterial ribosomal protein bL31 family. Type A subfamily. As to quaternary structure, part of the 50S ribosomal subunit.

Binds the 23S rRNA. This chain is Large ribosomal subunit protein bL31, found in Ruegeria sp. (strain TM1040) (Silicibacter sp.).